A 408-amino-acid chain; its full sequence is Serine/threonine transporter SstT (408 aa).

The next 10 membrane-spanning stretches (helical) occupy residues 15–35 (MGLI…AVIW), 49–69 (FISA…TAAI), 85–105 (LLYV…SFVF), 142–162 (ALME…GLML), 192–212 (PLGI…GALL), 218–238 (LAVI…LIVF), 246–268 (YPLV…SSAA), 289–309 (ISIP…ISVI), 317–337 (LGIP…SIAA), and 362–382 (TEVA…QDST).

The protein belongs to the dicarboxylate/amino acid:cation symporter (DAACS) (TC 2.A.23) family.

It is found in the cell inner membrane. It carries out the reaction L-serine(in) + Na(+)(in) = L-serine(out) + Na(+)(out). It catalyses the reaction L-threonine(in) + Na(+)(in) = L-threonine(out) + Na(+)(out). Involved in the import of serine and threonine into the cell, with the concomitant import of sodium (symport system). This is Serine/threonine transporter SstT from Marinobacter nauticus (strain ATCC 700491 / DSM 11845 / VT8) (Marinobacter aquaeolei).